Here is a 250-residue protein sequence, read N- to C-terminus: NADH-quinone oxidoreductase subunit C (250 aa).

This sequence belongs to the complex I 30 kDa subunit family. In terms of assembly, NDH-1 is composed of 14 different subunits. Subunits NuoB, C, D, E, F, and G constitute the peripheral sector of the complex.

Its subcellular location is the cell inner membrane. The catalysed reaction is a quinone + NADH + 5 H(+)(in) = a quinol + NAD(+) + 4 H(+)(out). In terms of biological role, NDH-1 shuttles electrons from NADH, via FMN and iron-sulfur (Fe-S) centers, to quinones in the respiratory chain. The immediate electron acceptor for the enzyme in this species is believed to be ubiquinone. Couples the redox reaction to proton translocation (for every two electrons transferred, four hydrogen ions are translocated across the cytoplasmic membrane), and thus conserves the redox energy in a proton gradient. This Xanthomonas campestris pv. campestris (strain 8004) protein is NADH-quinone oxidoreductase subunit C.